Reading from the N-terminus, the 320-residue chain is RNA-binding protein Musashi homolog 1 (320 aa).

The segment covering 1 to 14 (MTTTVSTGATAVAT) has biased composition (low complexity). A disordered region spans residues 1 to 48 (MTTTVSTGATAVATLRETSPPVDGHEEARLNADSDDGSHGSQDPGKMF). Thr-18 is subject to Phosphothreonine. A phosphoserine mark is found at Ser-19 and Ser-34. A compositionally biased stretch (basic and acidic residues) spans 23–38 (DGHEEARLNADSDDGS). RRM domains lie at 45-124 (GKMF…FPKR) and 134-211 (KKVF…KAQP). Required for binding to target mRNAs stretches follow at residues 88-93 (FGFITF) and 177-182 (FGFVTF).

The protein belongs to the Musashi family. As to expression, expressed in the gut and in AVA, AFD, RMD, RMED, RMEV, RMER and RMEL neurons (at protein level). In the tail expressed in neurons and all the ray sensilla. Expressed in male specific C1-C4 neurons.

The protein localises to the cytoplasm. Its subcellular location is the perikaryon. RNA binding protein that regulates the expression of target mRNAs at the translation level. Binds RNA containing the 5'-[GA]U(1-3)AGU-3' motif located in the 3' UTR of the target mRNA. Binds to the mRNA of three Arp2/3 complex components arx-1, arx-2 and arx-3 and negatively regulates their translation during association learning. Plays a role in time-dependent memory loss and the retention of conditioned behavior over time, probably through negative regulation of the Arp2/3 actin cytoskeleton branching complex and regulation of synapse size. Required for two aspects of male mating behavior: turning around the hermaphrodite head or tail and vulva location. This Caenorhabditis elegans protein is RNA-binding protein Musashi homolog 1.